The chain runs to 364 residues: CLIP domain-containing serine protease B15 (364 aa).

An N-terminal signal peptide occupies residues 1 to 19; it reads MRWLVCLIVSWCSLVPLGA. The Clip domain maps to 30–89; that stretch reads PCQTPSGTAGTCEPVKNCSYVRKILKSPDFSHYDTTYLDTLKCGDLMVPMRKKPIPLLCC. 3 disulfide bridges follow: C31-C88, C41-C72, and C47-C89. N46 is a glycosylation site (N-linked (GlcNAc...) asparagine). Residues 107-359 form the Peptidase S1 domain; that stretch reads IYFGEETERG…YLDWMETVMF (253 aa). N131 is a glycosylation site (N-linked (GlcNAc...) asparagine). A disulfide bridge connects residues C137 and C153. H152 acts as the Charge relay system in catalysis. N-linked (GlcNAc...) asparagine glycans are attached at residues N171, N177, and N206. D212 (charge relay system) is an active-site residue. Residues C279 and C296 are joined by a disulfide bond. N-linked (GlcNAc...) asparagine glycosylation is found at N287 and N301. C306 and C335 form a disulfide bridge. S310 acts as the Charge relay system in catalysis.

It belongs to the peptidase S1 family. CLIP subfamily. Post-translationally, N-glycosylated. Proteolytically cleaved. Expressed by a subpopulation of hemocytes.

Its subcellular location is the secreted. Serine protease. Plays a role in innate immunity against infections by parasite P.berghei and by Gram-negative bacteria such as E.coli. In response to P.berghei infection, contributes to the clearing of parasite ookinetes independent of melanization, an innate immune response which consists in the deposition of melanin pigments on invading pathogens and parasites. The protein is CLIP domain-containing serine protease B15 of Anopheles gambiae (African malaria mosquito).